Here is a 431-residue protein sequence, read N- to C-terminus: NADH-quinone oxidoreductase subunit D 2 (431 aa).

The tract at residues 1–37 (MSEAKGVGGIDPRATPGSAGAGERPPMGTLSPRAGEG) is disordered.

This sequence belongs to the complex I 49 kDa subunit family. NDH-1 is composed of 14 different subunits. Subunits NuoB, C, D, E, F, and G constitute the peripheral sector of the complex.

It localises to the cell inner membrane. It catalyses the reaction a quinone + NADH + 5 H(+)(in) = a quinol + NAD(+) + 4 H(+)(out). Functionally, NDH-1 shuttles electrons from NADH, via FMN and iron-sulfur (Fe-S) centers, to quinones in the respiratory chain. The immediate electron acceptor for the enzyme in this species is believed to be ubiquinone. Couples the redox reaction to proton translocation (for every two electrons transferred, four hydrogen ions are translocated across the cytoplasmic membrane), and thus conserves the redox energy in a proton gradient. This Anaeromyxobacter sp. (strain K) protein is NADH-quinone oxidoreductase subunit D 2.